A 217-amino-acid chain; its full sequence is Claudin-9 (217 aa).

Residues 1–12 lie on the Cytoplasmic side of the membrane; that stretch reads MASTGLELLGMT. The chain crosses the membrane as a helical span at residues 13–33; that stretch reads LAVLGWLGTLVSCALPLWKVT. At 34 to 81 the chain is on the extracellular side; that stretch reads AFIGNSIVVAQVVWEGLWMSCVVQSTGQMQCKVYDSLLALPQDLQAAR. The helical transmembrane segment at 82–102 threads the bilayer; the sequence is ALCVVALLLALLGLLVAITGA. The Cytoplasmic segment spans residues 103–116; the sequence is QCTTCVEDEGAKAR. The chain crosses the membrane as a helical span at residues 117 to 137; sequence IVLTAGVLLLLSGILVLIPVC. Residues 138–159 lie on the Extracellular side of the membrane; it reads WTAHAIIQDFYNPLVAEALKRE. The helical transmembrane segment at 160-180 threads the bilayer; the sequence is LGASLYLGWAAAALLMLGGGL. Residues 181–217 are Cytoplasmic-facing; that stretch reads LCCTCPPSHFERPRGPRLGYSIPSRSGASGLDKRDYV.

This sequence belongs to the claudin family. In terms of assembly, interacts with CLDN1, CD81 and OCLN.

Its subcellular location is the cell junction. It is found in the tight junction. The protein resides in the cell membrane. In terms of biological role, plays a major role in tight junction-specific obliteration of the intercellular space, through calcium-independent cell-adhesion activity. The chain is Claudin-9 (Cldn9) from Mus musculus (Mouse).